Reading from the N-terminus, the 217-residue chain is Putative thymidylate synthase (217 aa).

Residue Cys-139 is part of the active site.

It belongs to the thymidylate synthase family. Archaeal-type ThyA subfamily. As to quaternary structure, monomer.

It localises to the cytoplasm. The protein operates within pyrimidine metabolism; dTTP biosynthesis. Functionally, may catalyze the biosynthesis of dTMP using an unknown cosubstrate. The sequence is that of Putative thymidylate synthase from Methanosarcina barkeri (strain Fusaro / DSM 804).